We begin with the raw amino-acid sequence, 198 residues long: Glycerol-3-phosphate acyltransferase (198 aa).

A run of 5 helical transmembrane segments spans residues 2–22 (IIDLIWIITSYVIGSIPFGVL), 53–73 (LGFITLFFDVLKGFFPVVIAT), 79–99 (PFMYTMTGLAAIIGHLYSCFL), 113–133 (VLIPIAFWQLLFAAILCTFFI), and 152–172 (IILFITGKFAYIPLSLIIMAL).

It belongs to the PlsY family. As to quaternary structure, probably interacts with PlsX.

It localises to the cell membrane. The enzyme catalyses an acyl phosphate + sn-glycerol 3-phosphate = a 1-acyl-sn-glycero-3-phosphate + phosphate. It functions in the pathway lipid metabolism; phospholipid metabolism. Its function is as follows. Catalyzes the transfer of an acyl group from acyl-phosphate (acyl-PO(4)) to glycerol-3-phosphate (G3P) to form lysophosphatidic acid (LPA). This enzyme utilizes acyl-phosphate as fatty acyl donor, but not acyl-CoA or acyl-ACP. The chain is Glycerol-3-phosphate acyltransferase from Lawsonia intracellularis (strain PHE/MN1-00).